A 125-amino-acid polypeptide reads, in one-letter code: Small ribosomal subunit protein uS12 (125 aa).

Position 89 is a 3-methylthioaspartic acid (Asp-89).

Belongs to the universal ribosomal protein uS12 family. Part of the 30S ribosomal subunit. Contacts proteins S8 and S17. May interact with IF1 in the 30S initiation complex.

Its function is as follows. With S4 and S5 plays an important role in translational accuracy. In terms of biological role, interacts with and stabilizes bases of the 16S rRNA that are involved in tRNA selection in the A site and with the mRNA backbone. Located at the interface of the 30S and 50S subunits, it traverses the body of the 30S subunit contacting proteins on the other side and probably holding the rRNA structure together. The combined cluster of proteins S8, S12 and S17 appears to hold together the shoulder and platform of the 30S subunit. The protein is Small ribosomal subunit protein uS12 of Bordetella petrii (strain ATCC BAA-461 / DSM 12804 / CCUG 43448).